A 121-amino-acid chain; its full sequence is Large ribosomal subunit protein uL14 (121 aa).

This sequence belongs to the universal ribosomal protein uL14 family. As to quaternary structure, part of the 50S ribosomal subunit. Forms a cluster with proteins L3 and L19. In the 70S ribosome, L14 and L19 interact and together make contacts with the 16S rRNA in bridges B5 and B8.

In terms of biological role, binds to 23S rRNA. Forms part of two intersubunit bridges in the 70S ribosome. The sequence is that of Large ribosomal subunit protein uL14 from Porphyromonas gingivalis (strain ATCC 33277 / DSM 20709 / CIP 103683 / JCM 12257 / NCTC 11834 / 2561).